Here is a 357-residue protein sequence, read N- to C-terminus: Probable xyloglucan endotransglucosylase/hydrolase protein 29 (357 aa).

Residues 1 to 31 (MRDSIYLLWIDNRLVVIIMMVMMVSCRCVLG) form the signal peptide. In terms of domain architecture, GH16 spans 32–232 (LENINPIFFD…YTFSPFVSEF (201 aa)). The active-site Nucleophile is Glu-117. Residue Glu-121 is the Proton donor of the active site. Xyloglucan-binding positions include Glu-121 and 134–136 (QTN). N-linked (GlcNAc...) asparagine glycosylation occurs at Asn-140. Residues 144-148 (NRGRE), 211-212 (SW), and Gly-216 each bind xyloglucan. Residues Asn-241 and Asn-262 are each glycosylated (N-linked (GlcNAc...) asparagine). Cys-299 and Cys-312 are oxidised to a cystine. Xyloglucan is bound at residue Arg-304. A disordered region spans residues 326-357 (GRLKFGGSHPKVHKARKKRRRNRSTPVVSADL). Over residues 335-348 (PKVHKARKKRRRNR) the composition is skewed to basic residues. Asn-347 carries N-linked (GlcNAc...) asparagine glycosylation.

This sequence belongs to the glycosyl hydrolase 16 family. XTH group 3 subfamily. Contains at least one intrachain disulfide bond essential for its enzymatic activity.

It is found in the secreted. It localises to the cell wall. The protein localises to the extracellular space. Its subcellular location is the apoplast. It carries out the reaction breaks a beta-(1-&gt;4) bond in the backbone of a xyloglucan and transfers the xyloglucanyl segment on to O-4 of the non-reducing terminal glucose residue of an acceptor, which can be a xyloglucan or an oligosaccharide of xyloglucan.. Catalyzes xyloglucan endohydrolysis (XEH) and/or endotransglycosylation (XET). Cleaves and religates xyloglucan polymers, an essential constituent of the primary cell wall, and thereby participates in cell wall construction of growing tissues. This is Probable xyloglucan endotransglucosylase/hydrolase protein 29 (XTH29) from Arabidopsis thaliana (Mouse-ear cress).